We begin with the raw amino-acid sequence, 221 residues long: Arginine ABC transporter permease protein ArtQ (221 aa).

The ABC transmembrane type-1 domain maps to 13–206; it reads ALMTLGLAVC…AVTLISQVGI (194 aa). The next 5 membrane-spanning stretches (helical) occupy residues 17–37, 49–69, 82–102, 121–141, and 186–206; these read LGLAVCSLLLGLFLSLIFAVL, VFVALLRGLPEIIVVLLVYFG, IEFGAFGCGVLALSLIFAAYA, GAALGLSKSYTFIHIVMPQVW, and TWYGIAALIYLAVTLISQVGI.

It belongs to the binding-protein-dependent transport system permease family. HisMQ subfamily. The complex is composed of two ATP-binding proteins (ArtP), two transmembrane proteins (ArtM and ArtQ) and a solute-binding protein (ArtI).

It is found in the cell inner membrane. In terms of biological role, part of the ABC transporter complex ArtPIQM involved in arginine transport. Probably responsible for the translocation of the substrate across the membrane. This is Arginine ABC transporter permease protein ArtQ (artQ) from Haemophilus influenzae (strain ATCC 51907 / DSM 11121 / KW20 / Rd).